A 1120-amino-acid polypeptide reads, in one-letter code: Transcription-repair-coupling factor (1120 aa).

Residues 591-756 (DLTNGMLMDR…MTGLKELSII (166 aa)) form the Helicase ATP-binding domain. Residue 604-611 (GDVGFGKT) coordinates ATP. The DEEQ box signature appears at 709-712 (DEEQ). In terms of domain architecture, Helicase C-terminal spans 777–933 (IIRDALLREH…TIASHDADLR (157 aa)).

In the N-terminal section; belongs to the UvrB family. The protein in the C-terminal section; belongs to the helicase family. RecG subfamily.

Its subcellular location is the cytoplasm. Its function is as follows. Couples transcription and DNA repair by recognizing RNA polymerase (RNAP) stalled at DNA lesions. Mediates ATP-dependent release of RNAP and its truncated transcript from the DNA, and recruitment of nucleotide excision repair machinery to the damaged site. The polypeptide is Transcription-repair-coupling factor (Rickettsia prowazekii (strain Madrid E)).